We begin with the raw amino-acid sequence, 392 residues long: 8-amino-7-oxononanoate synthase (392 aa).

Arg26 lines the substrate pocket. 113–114 provides a ligand contact to pyridoxal 5'-phosphate; it reads GY. His138 contacts substrate. 3 residues coordinate pyridoxal 5'-phosphate: Ser186, His214, and Thr241. Residue Lys244 is modified to N6-(pyridoxal phosphate)lysine. Residue Thr353 participates in substrate binding.

It belongs to the class-II pyridoxal-phosphate-dependent aminotransferase family. BioF subfamily. In terms of assembly, homodimer. The cofactor is pyridoxal 5'-phosphate.

It carries out the reaction 6-carboxyhexanoyl-[ACP] + L-alanine + H(+) = (8S)-8-amino-7-oxononanoate + holo-[ACP] + CO2. Its pathway is cofactor biosynthesis; biotin biosynthesis. Its function is as follows. Catalyzes the decarboxylative condensation of pimeloyl-[acyl-carrier protein] and L-alanine to produce 8-amino-7-oxononanoate (AON), [acyl-carrier protein], and carbon dioxide. This is 8-amino-7-oxononanoate synthase from Maricaulis maris (strain MCS10) (Caulobacter maris).